The sequence spans 487 residues: Transcriptional adapter ADA2b (487 aa).

Residues 1–13 (MGRSRGNFQNFED) are compositionally biased toward polar residues. Positions 1–25 (MGRSRGNFQNFEDPTQRTRKKKNAA) are disordered. The segment at 42–98 (GGKYNCDYCQKDITGKIRIKCAVCPDFDLCIECMSVGAEITPHKCDHPYRVMGNLTF) adopts a ZZ-type zinc-finger fold. Cysteine 47, cysteine 50, cysteine 62, cysteine 65, cysteine 71, cysteine 74, histidine 84, and histidine 88 together coordinate Zn(2+). One can recognise an SANT domain in the interval 100–152 (LICPDWSADDEMLLLEGLEIYGLGNWAEVAEHVGTKSKEQCLEHYRNIYLNSP). Lysine 216 carries the post-translational modification N6-acetyllysine; by GCN5. Basic and acidic residues predominate over residues 368 to 383 (RKRKRENEEGMNRGKE). The tract at residues 368–388 (RKRKRENEEGMNRGKESGQFG) is disordered. The region spanning 401-487 (QASSSYVNDL…MLVKKGIAQL (87 aa)) is the SWIRM domain.

In terms of assembly, interacts in vitro with the HAT domain of GCN5 and with the DNA-binding domain of the transcriptional activator DREB1B/CBF1. Interacts with BZIP11. Acetylated in vitro by GCN5, but acetylation is not essential for biological activity. As to expression, expressed in roots, leaves, stems, flowers and siliques, with the strongest activity in the meristematic zones.

Its subcellular location is the nucleus. Its function is as follows. Required for the function of some acidic activation domains, which activate transcription from a distant site. The exact mechanism of action is not yet known. ADA2 stimulates the acetyltransferase activity of GCN5 on free histones or nucleosomes, probably by opening up the promoter region. Mediates auxin and cytokinin signals in the control of cell proliferation and might be involved in repression of a freezing tolerance pathway at warm temperature. Involved in the positive regulation of salt-induced gene expression by maintaining locus-specific acetylation of histones H4 and H3. This chain is Transcriptional adapter ADA2b (ADA2B), found in Arabidopsis thaliana (Mouse-ear cress).